We begin with the raw amino-acid sequence, 124 residues long: UPF0292 protein AF_0905 (124 aa).

The Toprim domain occupies 21–98 (GWVVVVEGKK…IPDVEIKRKI (78 aa)). The Mg(2+) site is built by glutamate 27, aspartate 67, and aspartate 69.

The protein belongs to the UPF0292 family. It depends on Mg(2+) as a cofactor.

This is UPF0292 protein AF_0905 from Archaeoglobus fulgidus (strain ATCC 49558 / DSM 4304 / JCM 9628 / NBRC 100126 / VC-16).